A 225-amino-acid chain; its full sequence is Ribonuclease 3 (225 aa).

An RNase III domain is found at 7–129 (IPRLCRTLGY…IIGAVYLDSD (123 aa)). E42 lines the Mg(2+) pocket. D46 is an active-site residue. 2 residues coordinate Mg(2+): D115 and E118. E118 is an active-site residue. The region spanning 155 to 225 (DPKTLLQELL…AAQALELIKR (71 aa)) is the DRBM domain.

This sequence belongs to the ribonuclease III family. In terms of assembly, homodimer. Mg(2+) serves as cofactor.

It localises to the cytoplasm. It carries out the reaction Endonucleolytic cleavage to 5'-phosphomonoester.. Digests double-stranded RNA. Involved in the processing of primary rRNA transcript to yield the immediate precursors to the large and small rRNAs (23S and 16S). Processes some mRNAs, and tRNAs when they are encoded in the rRNA operon. Processes pre-crRNA and tracrRNA of type II CRISPR loci if present in the organism. This chain is Ribonuclease 3, found in Shewanella woodyi (strain ATCC 51908 / MS32).